The sequence spans 155 residues: Small ribosomal subunit protein uS7cz/uS7cy (155 aa).

This sequence belongs to the universal ribosomal protein uS7 family. As to quaternary structure, part of the 30S ribosomal subunit.

Its subcellular location is the plastid. The protein resides in the chloroplast. Its function is as follows. One of the primary rRNA binding proteins, it binds directly to 16S rRNA where it nucleates assembly of the head domain of the 30S subunit. The chain is Small ribosomal subunit protein uS7cz/uS7cy (rps7-A) from Nandina domestica (Heavenly bamboo).